The sequence spans 374 residues: Tomoregulin-2 (374 aa).

An N-terminal signal peptide occupies residues 1–39 (MVLWESPRQCSSWTLCEGFCWLLLLPVMLLIVARPVKLA). Residues 40–320 (AFPTSLSDCQ…VPGPVRFQYV (281 aa)) lie on the Extracellular side of the membrane. Asparagine 55 is a glycosylation site (N-linked (GlcNAc...) asparagine). Kazal-like domains lie at 90–137 (VCQF…SCAT) and 181–229 (VCNI…RCQD). Intrachain disulfides connect cysteine 91–cysteine 121, cysteine 95–cysteine 114, cysteine 103–cysteine 135, cysteine 182–cysteine 213, cysteine 186–cysteine 206, cysteine 195–cysteine 227, cysteine 265–cysteine 278, cysteine 273–cysteine 289, and cysteine 291–cysteine 300. The region spanning 261–301 (HHIPCPEHYNGFCMHGKCEHSINMQEPSCRCDAGYTGQHCE) is the EGF-like domain. The interval 303-320 (KDYSVLYVVPGPVRFQYV) is required for shedding. Residues 321 to 341 (LIAAVIGTIQIAVICVVVLCI) traverse the membrane as a helical segment. Residues 342–374 (TRKCPRSNRIHRQKQNTGHYSSDNTTRASTRLI) lie on the Cytoplasmic side of the membrane. A disordered region spans residues 353 to 374 (RQKQNTGHYSSDNTTRASTRLI). Over residues 356–374 (QNTGHYSSDNTTRASTRLI) the composition is skewed to polar residues.

Belongs to the tomoregulin family. Post-translationally, O-glycosylated; contains chondroitin sulfate glycosaminoglycans. A soluble form (TMEFF2-ECD) is produced by proteolytic shedding. This shedding can be induced by phorbol ester or pro-inflammatory cytokines such as TNFalpha, and is mediated by a metalloproteinase ADAM.

The protein localises to the membrane. Its function is as follows. May be a survival factor for hippocampal and mesencephalic neurons. The shedded form may up-regulate cell proliferation. The protein is Tomoregulin-2 (TMEFF2) of Bos taurus (Bovine).